The following is a 551-amino-acid chain: RCC1 and BTB domain-containing protein 2 (551 aa).

RCC1 repeat units lie at residues 64–115, 117–169, 171–222, 223–274, 276–326, and 328–382; these read NDEI…VLAT, DGEV…VLTS, GEVF…AVVD, TGEV…VLTD, GQIY…AAKS, and GGHV…TVAE. Residues 394 to 457 enclose the BTB domain; it reads ADLKFLVDGK…LYTDNISLPP (64 aa).

Its subcellular location is the cytoplasmic vesicle. The protein resides in the secretory vesicle. It localises to the acrosome. In Rattus norvegicus (Rat), this protein is RCC1 and BTB domain-containing protein 2 (Rcbtb2).